A 588-amino-acid polypeptide reads, in one-letter code: UDP-N-acetylmuramate--L-alanine ligase (588 aa).

119-125 (GSHGKST) serves as a coordination point for ATP. Positions 344 to 371 (VPAAAGAAAAPPVRRDPATAAAAATTAP) are enriched in low complexity. Residues 344–411 (VPAAAGAAAA…APAAGPDHAA (68 aa)) are disordered. Over residues 372–381 (IGPPDSPPPT) the composition is skewed to pro residues. Residues 382–411 (GIALPRAAPPAVDAPVAATPAPAAGPDHAA) are compositionally biased toward low complexity.

This sequence belongs to the MurCDEF family.

It localises to the cytoplasm. It catalyses the reaction UDP-N-acetyl-alpha-D-muramate + L-alanine + ATP = UDP-N-acetyl-alpha-D-muramoyl-L-alanine + ADP + phosphate + H(+). It functions in the pathway cell wall biogenesis; peptidoglycan biosynthesis. Its function is as follows. Cell wall formation. This is UDP-N-acetylmuramate--L-alanine ligase from Frankia alni (strain DSM 45986 / CECT 9034 / ACN14a).